The following is a 597-amino-acid chain: 2-isopropylmalate synthase (597 aa).

Residues 1-80 (MQLDIDRLVA…QKNESLERTE (80 aa)) are unknown. Positions 87–349 (VIIFDTTLRD…ETGIDTTQIV (263 aa)) constitute a Pyruvate carboxyltransferase domain. The segment at 87-349 (VIIFDTTLRD…ETGIDTTQIV (263 aa)) is 2-isopropylmalate synthase. Mn(2+) contacts are provided by aspartate 96, histidine 284, histidine 286, and asparagine 320. Residues 475–597 (KFISQKISTE…KPKAQGSGTI (123 aa)) form a regulatory domain region.

It belongs to the alpha-IPM synthase/homocitrate synthase family. LeuA type 1 subfamily. Homodimer. Mn(2+) serves as cofactor.

The protein resides in the cytoplasm. It carries out the reaction 3-methyl-2-oxobutanoate + acetyl-CoA + H2O = (2S)-2-isopropylmalate + CoA + H(+). The protein operates within amino-acid biosynthesis; L-leucine biosynthesis; L-leucine from 3-methyl-2-oxobutanoate: step 1/4. Functionally, catalyzes the condensation of the acetyl group of acetyl-CoA with 3-methyl-2-oxobutanoate (2-ketoisovalerate) to form 3-carboxy-3-hydroxy-4-methylpentanoate (2-isopropylmalate). This Neisseria gonorrhoeae (strain ATCC 700825 / FA 1090) protein is 2-isopropylmalate synthase.